Reading from the N-terminus, the 1564-residue chain is MGDYLLSWSWILDAFETSDENLSQNKFEELLDARIAAFQQIESPVTGTLNSNKTTEGEEAKLSIYDSSHSISKSQLESVKKISDITGYNEAQVAYVLLVHQYELNTQYFSQLDNDSVLAQEFQRRYYAEIISCWKVLAFLLQACTDADSKWHKMATRLIVSIFQTAQRSGENAQSTTPSIFCVRIIDYLSKMTSQAAPASLTFNGEEAISQWYFFHFNLQLQLLRVIFLSTYSLVVCNSEMAISWFNCMKKTRYLHDQEFMHLDIDTGFSMCKEITNVAIIISINFISLEKQVLSFKDNPSFFMLSGNTIISLHDMITQLSNDSIGAAVSLTWGIALHLLSNSPDNIPLIQNSSVVSSKILQNPQNSFQALIIAALKYDPFTLIHRIISSLEDDPYIDGYSKIMATLFSSAVSYVKFSDSTMLCATTLFKTPQVYQLFENNDSVTRLLNFARARFPFEYSQFVLLLIPTFACLTSKQLVSSELLHMTTFTQSLPSGFKAYEIIPEPNVTGNALIELQESLHLDSYGFFFPNAERSLPKGTRGRIVSVDTYPPVVMWDLNYSLWEAVGISLNYIVRNGLINSHKSFVLTVLSSSVPLFQTDVSGACELVHLASEGLDGELDFINVICDLLDYFLSLSVIEDADYQICVSSLRLLREFTRFAATDVWAYVTRSLVCVGSEKGISLEDVIFDYESINGVYDFTLAFFDLYEILLDNCISTSVVPDDFSIRLKTDFVKRAMRFLCEVFANYLDWKYARIIQQYQIGHRFASLITKLLNVTFGIEYFNPKTTVNKKTLPLRELSHYIVQRFLVQQDSNRYLHPLLSVMDLINLLYTDIFSTISSPRAKAAKMWLISSFCAMKTLICLRGFLNLKPSELERELFSRSPDLFNCLPRLLCCIAPILQLLSALILAPWPSETPSLLAYMINSTDIVGRVCIQILTNPIQSTNIEGSVWKFLSSIMKGQQQGLAVLLFSGKKFPLDRMKSLNHNVDVQLTSKSLISLAEKRLDSFSINDILSQVPVFEFIFLSRNFWTASLGNLQQEANFWNRIVDAIKLPLTVKLDGLSSVAQADLYILAAHATRITAIQLHMSKLNKSNSSKKIIIDPLKDSMKDLVQHAFTITAYDSNIHNALTRAFKHENGDLHISDLRNTGLFPLRYGDNYFYNIKLAKNMLLNTEDTSFKISMMMSANENLSLLDAQAALLRSWSIFICAFVEFVKEDATLSILELKIMKWVLKSLAEDTIDVNVVQELSAERAALVFRISQQTLAIPISNEVKEHLQSILLLTWKAITTTKFSIYEDSNGEMAYYRPLLHVLYNTLNRLLSEEKENLSLSVGFVSGLLQLCHRKLSQLFEKAVINPTIEVYGDIVLLNSLHKCIVNSHLIRGLQSLYISYINDSFSVDNCLRLFSWSHSLLVDGQPYFADAALSFLLICSSSPAGAEQIVMNGFFYSIMESPLSTALSTGGLGLDGSSIQYKIWIRGILPLLFNIVKFLGNRIMNDMREFVLLAFPQIQYALLNWCQPPSSISLASIDESFMIVLLFDLLQQFNPALLQEIRLAELKIEMLEASTI.

It is found in the nucleus. Its subcellular location is the nuclear pore complex. Interacts with pom152 in the core structure of the nuclear pore complex (NPC). Involved in the export of mRNA. In Schizosaccharomyces pombe (strain 972 / ATCC 24843) (Fission yeast), this protein is Nucleoporin nup184 (nup184).